We begin with the raw amino-acid sequence, 218 residues long: Autophagy-related protein 101 (218 aa).

This sequence belongs to the ATG101 family.

The protein localises to the cytoplasm. Its subcellular location is the preautophagosomal structure. Its function is as follows. Autophagy factor required for autophagosome formation. This Xenopus laevis (African clawed frog) protein is Autophagy-related protein 101 (atg101).